Consider the following 335-residue polypeptide: Fructose-1,6-bisphosphatase class 1 1 (335 aa).

Positions 92, 114, 116, and 117 each coordinate Mg(2+). Substrate-binding positions include 117 to 120 (DGSS), Asn209, and Lys275. A Mg(2+)-binding site is contributed by Glu281.

Belongs to the FBPase class 1 family. In terms of assembly, homotetramer. It depends on Mg(2+) as a cofactor.

It is found in the cytoplasm. It carries out the reaction beta-D-fructose 1,6-bisphosphate + H2O = beta-D-fructose 6-phosphate + phosphate. It functions in the pathway carbohydrate biosynthesis; gluconeogenesis. This Polaromonas naphthalenivorans (strain CJ2) protein is Fructose-1,6-bisphosphatase class 1 1.